The following is a 245-amino-acid chain: 1-(5-phosphoribosyl)-5-[(5-phosphoribosylamino)methylideneamino] imidazole-4-carboxamide isomerase (245 aa).

Catalysis depends on aspartate 7, which acts as the Proton acceptor. Aspartate 129 functions as the Proton donor in the catalytic mechanism.

This sequence belongs to the HisA/HisF family.

The protein resides in the cytoplasm. It catalyses the reaction 1-(5-phospho-beta-D-ribosyl)-5-[(5-phospho-beta-D-ribosylamino)methylideneamino]imidazole-4-carboxamide = 5-[(5-phospho-1-deoxy-D-ribulos-1-ylimino)methylamino]-1-(5-phospho-beta-D-ribosyl)imidazole-4-carboxamide. Its pathway is amino-acid biosynthesis; L-histidine biosynthesis; L-histidine from 5-phospho-alpha-D-ribose 1-diphosphate: step 4/9. The protein is 1-(5-phosphoribosyl)-5-[(5-phosphoribosylamino)methylideneamino] imidazole-4-carboxamide isomerase of Shewanella frigidimarina (strain NCIMB 400).